A 69-amino-acid polypeptide reads, in one-letter code: Fumarase D (69 aa).

This sequence belongs to the FumD family.

It carries out the reaction (S)-malate = fumarate + H2O. Functionally, in vitro catalyzes the addition of water to fumarate, forming malate. Cannot catalyze the reverse reaction. Cannot use the cis-isomer maleate as substrate. The protein is Fumarase D of Shigella flexneri.